The primary structure comprises 154 residues: UPF0178 protein in pahZ1 5'region (154 aa).

This sequence belongs to the UPF0178 family.

This is UPF0178 protein in pahZ1 5'region from Paucimonas lemoignei (Pseudomonas lemoignei).